Reading from the N-terminus, the 215-residue chain is Pyrrolidone-carboxylate peptidase (215 aa).

Active-site residues include glutamate 78, cysteine 141, and histidine 165.

The protein belongs to the peptidase C15 family. Homotetramer.

The protein resides in the cytoplasm. The enzyme catalyses Release of an N-terminal pyroglutamyl group from a polypeptide, the second amino acid generally not being Pro.. Removes 5-oxoproline from various penultimate amino acid residues except L-proline. The chain is Pyrrolidone-carboxylate peptidase from Lacticaseibacillus paracasei (strain ATCC 334 / BCRC 17002 / CCUG 31169 / CIP 107868 / KCTC 3260 / NRRL B-441) (Lactobacillus paracasei).